The primary structure comprises 44 residues: NWSSLIFSLNLQRRILPKPTRKSRIKNKQKRPRSRTLTAVHDAI.

A compositionally biased stretch (basic residues) spans 18 to 34 (KPTRKSRIKNKQKRPRS). The disordered stretch occupies residues 18 to 44 (KPTRKSRIKNKQKRPRSRTLTAVHDAI).

This sequence belongs to the eukaryotic ribosomal protein eS7 family. In terms of assembly, component of the small ribosomal subunit.

It is found in the cytoplasm. It localises to the cytoskeleton. The protein resides in the microtubule organizing center. The protein localises to the centrosome. Its subcellular location is the nucleus. Functionally, component of the small ribosomal subunit. The ribosome is a large ribonucleoprotein complex responsible for the synthesis of proteins in the cell. Required for rRNA maturation. This chain is Small ribosomal subunit protein eS7 (rps7), found in Salmo salar (Atlantic salmon).